A 386-amino-acid chain; its full sequence is Alkanesulfonate monooxygenase (386 aa).

This sequence belongs to the SsuD family.

The catalysed reaction is an alkanesulfonate + FMNH2 + O2 = an aldehyde + FMN + sulfite + H2O + 2 H(+). Functionally, catalyzes the desulfonation of aliphatic sulfonates. The protein is Alkanesulfonate monooxygenase of Paraburkholderia phytofirmans (strain DSM 17436 / LMG 22146 / PsJN) (Burkholderia phytofirmans).